Reading from the N-terminus, the 332-residue chain is tRNA-dihydrouridine synthase B (332 aa).

FMN contacts are provided by residues 16-18 (PMA) and Gln-70. The active-site Proton donor is Cys-100. FMN-binding positions include Lys-139, 200-202 (NGD), and 224-225 (GR).

The protein belongs to the Dus family. DusB subfamily. It depends on FMN as a cofactor.

The catalysed reaction is a 5,6-dihydrouridine in tRNA + NAD(+) = a uridine in tRNA + NADH + H(+). It catalyses the reaction a 5,6-dihydrouridine in tRNA + NADP(+) = a uridine in tRNA + NADPH + H(+). Its function is as follows. Catalyzes the synthesis of 5,6-dihydrouridine (D), a modified base found in the D-loop of most tRNAs, via the reduction of the C5-C6 double bond in target uridines. The protein is tRNA-dihydrouridine synthase B of Xanthomonas axonopodis pv. citri (strain 306).